A 431-amino-acid chain; its full sequence is Histidinol dehydrogenase (431 aa).

Residues tyrosine 127, glutamine 189, and asparagine 212 each coordinate NAD(+). Residues serine 237, glutamine 259, and histidine 262 each coordinate substrate. Zn(2+) contacts are provided by glutamine 259 and histidine 262. Catalysis depends on proton acceptor residues glutamate 326 and histidine 327. Residues histidine 327, aspartate 360, glutamate 414, and histidine 419 each coordinate substrate. Aspartate 360 is a binding site for Zn(2+). Zn(2+) is bound at residue histidine 419.

Belongs to the histidinol dehydrogenase family. Zn(2+) serves as cofactor.

The enzyme catalyses L-histidinol + 2 NAD(+) + H2O = L-histidine + 2 NADH + 3 H(+). It functions in the pathway amino-acid biosynthesis; L-histidine biosynthesis; L-histidine from 5-phospho-alpha-D-ribose 1-diphosphate: step 9/9. Functionally, catalyzes the sequential NAD-dependent oxidations of L-histidinol to L-histidinaldehyde and then to L-histidine. In Xanthomonas campestris pv. campestris (strain 8004), this protein is Histidinol dehydrogenase.